A 210-amino-acid chain; its full sequence is Syntaxin-binding protein 6 (210 aa).

Position 2 is an N-acetylserine (serine 2). The region spanning 151 to 210 is the v-SNARE coiled-coil homology domain; that stretch reads GNSILHSAADSVTSAVQKASQALNERGERLGRAEEKTEDLKNSAQQFAETAHKLAMKHKC.

As to quaternary structure, part of a ternary complex containing SNAP25 and STX1A that can be dissociated by NAPA and NSF. Interacts with STX4A.

The protein resides in the cytoplasm. The protein localises to the membrane. In terms of biological role, forms non-fusogenic complexes with SNAP25 and STX1A and may thereby modulate the formation of functional SNARE complexes and exocytosis. This chain is Syntaxin-binding protein 6 (STXBP6), found in Bos taurus (Bovine).